The following is a 684-amino-acid chain: Amino-acid acetyltransferase, mitochondrial (684 aa).

Positions 414 to 439 are disordered; the sequence is PQDATNSASEPRDPSQLSTVATRRKR. Positions 415 to 434 are enriched in polar residues; the sequence is QDATNSASEPRDPSQLSTVA. The N-acetyltransferase domain occupies 505–674; it reads GKSRMTLNDP…YEGVCRGIEP (170 aa).

This sequence belongs to the acetyltransferase family.

It localises to the mitochondrion. It catalyses the reaction L-glutamate + acetyl-CoA = N-acetyl-L-glutamate + CoA + H(+). It participates in amino-acid biosynthesis; L-arginine biosynthesis; N(2)-acetyl-L-ornithine from L-glutamate: step 1/4. Functionally, N-acetylglutamate synthase involved in arginine biosynthesis. The chain is Amino-acid acetyltransferase, mitochondrial (ARG2) from Ajellomyces capsulatus (strain NAm1 / WU24) (Darling's disease fungus).